Consider the following 393-residue polypeptide: NAD(P)H-quinone oxidoreductase subunit H, chloroplastic (393 aa).

It belongs to the complex I 49 kDa subunit family. NDH is composed of at least 16 different subunits, 5 of which are encoded in the nucleus.

The protein resides in the plastid. It is found in the chloroplast thylakoid membrane. The catalysed reaction is a plastoquinone + NADH + (n+1) H(+)(in) = a plastoquinol + NAD(+) + n H(+)(out). The enzyme catalyses a plastoquinone + NADPH + (n+1) H(+)(in) = a plastoquinol + NADP(+) + n H(+)(out). Its function is as follows. NDH shuttles electrons from NAD(P)H:plastoquinone, via FMN and iron-sulfur (Fe-S) centers, to quinones in the photosynthetic chain and possibly in a chloroplast respiratory chain. The immediate electron acceptor for the enzyme in this species is believed to be plastoquinone. Couples the redox reaction to proton translocation, and thus conserves the redox energy in a proton gradient. This is NAD(P)H-quinone oxidoreductase subunit H, chloroplastic from Arabis hirsuta (Hairy rock-cress).